Consider the following 71-residue polypeptide: Sec-independent protein translocase protein TatA (71 aa).

Residues 1-21 traverse the membrane as a helical segment; it reads MGSFSLLHWLVVLVIVLLVFG. The segment at 43 to 71 is disordered; sequence LHEDDKPTDQLGSTSQSTASGPQQDHGKH. Over residues 52-65 the composition is skewed to polar residues; sequence QLGSTSQSTASGPQ.

The protein belongs to the TatA/E family. The Tat system comprises two distinct complexes: a TatABC complex, containing multiple copies of TatA, TatB and TatC subunits, and a separate TatA complex, containing only TatA subunits. Substrates initially bind to the TatABC complex, which probably triggers association of the separate TatA complex to form the active translocon.

The protein resides in the cell inner membrane. Part of the twin-arginine translocation (Tat) system that transports large folded proteins containing a characteristic twin-arginine motif in their signal peptide across membranes. TatA could form the protein-conducting channel of the Tat system. This chain is Sec-independent protein translocase protein TatA, found in Xylella fastidiosa (strain M12).